Reading from the N-terminus, the 508-residue chain is Alpha-amylase (508 aa).

The first 19 residues, 1–19 (MLSLIIAACCVTVALAGTF), serve as a signal peptide directing secretion. Cysteine 46 and cysteine 102 are oxidised to a cystine. Positions 116, 173, and 182 each coordinate Ca(2+). Cysteine 156 and cysteine 175 are oxidised to a cystine. Residue arginine 210 participates in chloride binding. Aspartate 212 functions as the Nucleophile in the catalytic mechanism. Histidine 216 contributes to the Ca(2+) binding site. The Proton donor role is filled by glutamate 248. 2 residues coordinate chloride: asparagine 311 and arginine 349. 2 disulfides stabilise this stretch: cysteine 383–cysteine 389 and cysteine 455–cysteine 467.

This sequence belongs to the glycosyl hydrolase 13 family. In terms of assembly, monomer. The cofactor is Ca(2+). Chloride serves as cofactor.

The enzyme catalyses Endohydrolysis of (1-&gt;4)-alpha-D-glucosidic linkages in polysaccharides containing three or more (1-&gt;4)-alpha-linked D-glucose units.. The polypeptide is Alpha-amylase (Pecten maximus (King scallop)).